Reading from the N-terminus, the 59-residue chain is Conotoxin Ts-03 (59 aa).

A signal peptide spans Met1–Ser19. Residues Val20–Ala47 constitute a propeptide that is removed on maturation.

The protein belongs to the conotoxin T superfamily. Contains 2 disulfide bonds that can be either 'C1-C3, C2-C4' or 'C1-C4, C2-C3', since these disulfide connectivities have been observed for conotoxins with cysteine framework V (for examples, see AC P0DQQ7 and AC P81755). In terms of tissue distribution, expressed by the venom duct.

The protein resides in the secreted. This chain is Conotoxin Ts-03, found in Conus tessulatus (Tessellate cone).